Here is a 197-residue protein sequence, read N- to C-terminus: Ion-translocating oxidoreductase complex subunit B (197 aa).

The segment at 1-26 (MSTILIAIIALAVLAAVFGAILGFAS) is hydrophobic. Positions 32–90 (EADPIVDQIDTILPQTQCGQCGYPGCRPYAEAIANGDKINKCPPGGQATIEKLADLMGV) constitute a 4Fe-4S domain. [4Fe-4S] cluster-binding residues include cysteine 49, cysteine 52, cysteine 57, cysteine 73, cysteine 114, cysteine 117, cysteine 120, cysteine 124, cysteine 144, cysteine 147, cysteine 150, and cysteine 154. 2 4Fe-4S ferredoxin-type domains span residues 105 to 134 (TVAF…GGTK) and 135 to 164 (ALHT…MIPV).

The protein belongs to the 4Fe4S bacterial-type ferredoxin family. RnfB subfamily. The complex is composed of six subunits: RnfA, RnfB, RnfC, RnfD, RnfE and RnfG. The cofactor is [4Fe-4S] cluster.

The protein localises to the cell inner membrane. Its function is as follows. Part of a membrane-bound complex that couples electron transfer with translocation of ions across the membrane. The sequence is that of Ion-translocating oxidoreductase complex subunit B from Vibrio atlanticus (strain LGP32) (Vibrio splendidus (strain Mel32)).